A 70-amino-acid chain; its full sequence is NAD(P)H-quinone oxidoreductase subunit O (70 aa).

The protein belongs to the complex I NdhO subunit family. As to quaternary structure, NDH-1 can be composed of about 15 different subunits; different subcomplexes with different compositions have been identified which probably have different functions.

The protein resides in the cellular thylakoid membrane. It catalyses the reaction a plastoquinone + NADH + (n+1) H(+)(in) = a plastoquinol + NAD(+) + n H(+)(out). The enzyme catalyses a plastoquinone + NADPH + (n+1) H(+)(in) = a plastoquinol + NADP(+) + n H(+)(out). NDH-1 shuttles electrons from an unknown electron donor, via FMN and iron-sulfur (Fe-S) centers, to quinones in the respiratory and/or the photosynthetic chain. The immediate electron acceptor for the enzyme in this species is believed to be plastoquinone. Couples the redox reaction to proton translocation, and thus conserves the redox energy in a proton gradient. Cyanobacterial NDH-1 also plays a role in inorganic carbon-concentration. In Nostoc sp. (strain PCC 7120 / SAG 25.82 / UTEX 2576), this protein is NAD(P)H-quinone oxidoreductase subunit O.